The following is a 96-amino-acid chain: uncharacterized protein (96 aa).

This is an uncharacterized protein from Sulfolobus islandicus filamentous virus (isolate Iceland/Hveragerdi) (SIFV).